Here is a 140-residue protein sequence, read N- to C-terminus: Large ribosomal subunit protein uL14 (140 aa).

Belongs to the universal ribosomal protein uL14 family. Part of the 50S ribosomal subunit. Forms a cluster with proteins L3 and L24e, part of which may contact the 16S rRNA in 2 intersubunit bridges.

In terms of biological role, binds to 23S rRNA. Forms part of two intersubunit bridges in the 70S ribosome. The sequence is that of Large ribosomal subunit protein uL14 from Aeropyrum pernix (strain ATCC 700893 / DSM 11879 / JCM 9820 / NBRC 100138 / K1).